The sequence spans 779 residues: MYFWVMFFTLMIKVKLYITNGDIFQNRPTVYVVYLGANRLKNAALASSHHLHLLSKVFTSKDDAEQSMLYSYNNGFLGFSAKLNSTQAASLAKLNQVITVFKSKSLKLHTTRSWDFLGLAVDNARRTPPPQLAYGSDIVVGIFDTGIWPESESFRETPEAKPIPSSWNGKCVGGEDFDPSVHCNRKLIGARFYLRGFEETYGTIDFTRDPEYRSPRDYLGHGTHTASTAVGSVVRNVSGFFGLGRGTARGGAPLARLAVFKTCWGKDLEGVCTEADILAAFDDAIHDGVHVISASFGYSPPLSPFFESSADIGAFHAAERGISVVFSTGNDGPDPGVVQNVAPWAVSVAASTVDRSFPTRIVIDGSFTLTGQSLISQEITGTLALATTYFNGGVCKWENWMKKLANETIILCFSTLGPVQFIEEAQAAAIRANALALIFAASPTRQLAEEVDMIPTVRVDILHGTRIRNYLARSPTVPMVKIGPSKTVIGETTAPSVAYFSSRGPSSLSPDILKPDITAPGIGILAAWPPRTPPTLLPGDHRSIEWNFQSGTSMSCPHVAGVMALLQSAHPDWSPSAIRSAIMTTAYTRDTSYDLILSGGSMKSTDPFDIGAGHINPLKAMDPGLVYNTRTDDYVLFMCNIGYTDQEIKSMVLHPEPSTTCLPSHSYRTNADFNYPSITIPSLRLTRTIKRTVSNVGPNKNTVYFVDIIRPVGVEVLIWPRILVFSKCQQEHSYYVTFKPTEIFSGRYVFGEIMWTNGLHRVRSPVVVFLSNAGFLASS.

The signal sequence occupies residues 1-21; the sequence is MYFWVMFFTLMIKVKLYITNG. Residues 22-109 constitute a propeptide, activation peptide; it reads DIFQNRPTVY…VFKSKSLKLH (88 aa). An Inhibitor I9 domain is found at 30-109; sequence VYVVYLGANR…VFKSKSLKLH (80 aa). Asparagine 84 carries an N-linked (GlcNAc...) asparagine glycan. The 509-residue stretch at 113–621 folds into the Peptidase S8 domain; sequence SWDFLGLAVD…AGHINPLKAM (509 aa). Active-site charge relay system residues include aspartate 144 and histidine 221. N-linked (GlcNAc...) asparagine glycosylation is found at asparagine 236 and asparagine 406. The active-site Charge relay system is the serine 553.

This sequence belongs to the peptidase S8 family.

It is found in the secreted. This Arabidopsis thaliana (Mouse-ear cress) protein is Subtilisin-like protease SBT3.18.